Reading from the N-terminus, the 204-residue chain is FMN-dependent NADH:quinone oxidoreductase 2 (204 aa).

Residues serine 10 and 16–18 (SIS) contribute to the FMN site.

The protein belongs to the azoreductase type 1 family. As to quaternary structure, homodimer. The cofactor is FMN.

It carries out the reaction 2 a quinone + NADH + H(+) = 2 a 1,4-benzosemiquinone + NAD(+). It catalyses the reaction N,N-dimethyl-1,4-phenylenediamine + anthranilate + 2 NAD(+) = 2-(4-dimethylaminophenyl)diazenylbenzoate + 2 NADH + 2 H(+). Quinone reductase that provides resistance to thiol-specific stress caused by electrophilic quinones. Its function is as follows. Also exhibits azoreductase activity. Catalyzes the reductive cleavage of the azo bond in aromatic azo compounds to the corresponding amines. This is FMN-dependent NADH:quinone oxidoreductase 2 from Jannaschia sp. (strain CCS1).